A 467-amino-acid polypeptide reads, in one-letter code: Chromosomal replication initiator protein DnaA (467 aa).

Residues 1–85 are domain I, interacts with DnaA modulators; that stretch reads MTTTLWPQVL…LEVGEYAIES (85 aa). The domain II stretch occupies residues 85–130; that stretch reads SFNEPENTSVPQPLRETKAEREAAEKAASSTSKKKSDSPPKKTIKH. Residues 87-129 form a disordered region; sequence NEPENTSVPQPLRETKAEREAAEKAASSTSKKKSDSPPKKTIK. A compositionally biased stretch (basic and acidic residues) spans 99-109; the sequence is RETKAEREAAE. The interval 131–347 is domain III, AAA+ region; that stretch reads NLNTNFTFDT…GALKRVGAFA (217 aa). Residues Gly175, Gly177, Lys178, and Thr179 each coordinate ATP. Positions 348-467 are domain IV, binds dsDNA; sequence QFTQQLVTVD…FNSLIRIITN (120 aa).

The protein belongs to the DnaA family. As to quaternary structure, oligomerizes as a right-handed, spiral filament on DNA at oriC.

The protein resides in the cytoplasm. In terms of biological role, plays an essential role in the initiation and regulation of chromosomal replication. ATP-DnaA binds to the origin of replication (oriC) to initiate formation of the DNA replication initiation complex once per cell cycle. Binds the DnaA box (a 9 base pair repeat at the origin) and separates the double-stranded (ds)DNA. Forms a right-handed helical filament on oriC DNA; dsDNA binds to the exterior of the filament while single-stranded (ss)DNA is stabiized in the filament's interior. The ATP-DnaA-oriC complex binds and stabilizes one strand of the AT-rich DNA unwinding element (DUE), permitting loading of DNA polymerase. After initiation quickly degrades to an ADP-DnaA complex that is not apt for DNA replication. Binds acidic phospholipids. This is Chromosomal replication initiator protein DnaA from Hydrogenovibrio crunogenus (strain DSM 25203 / XCL-2) (Thiomicrospira crunogena).